A 2161-amino-acid chain; its full sequence is MSGDNRRRDRKDTRWSKKPKVVNTAEDELESKLGFGLFSEGETRLGWLLTFSSSSWEDRDTGKVYSCVDLYFVTQDGFSFKTKYKFRPYFYAATKDKMELELEAYLRRRYERQVADIEIVEKEDLDLKNHLSGLQKKYLKISFDTVQQLMEVKRDLLHIVERNQAKFDALEAYESILAGKREQRPQDCLDSIVDLREYDVPYHVRFAIDNDVRSGQWYNVSISSTDVILEKRTDLLQRAEVRVCAFDIETTKLPLKFPDAEYDQIMMISYMVDGQGFLIINRECVGEDVEDLEYTPKPEFEGYFKVTNVKNEVELLQRWFYHMQELKPGIYVTYNGDFFDWPFIERRASHHGIKMNEELGFRCDQNQGECRAKFACHLDCFAWVKRDSYLPQGSHGLKAVTKAKLGYDPLEVNPEDMVRFAMEKPQTMASYSVSDAVATYYLYMTYVNPFIFSLATIIPMVPDEVLRKGSGTLCEMLLMVEAYKANVVCPNKNQADPEKFYQNQLLESETYIGGHVECLESGVFRSDIPTSFKLDSSAYQQLIDNLGRDLEYAITVEGKMRMDSISNYDEVKDEIKEKLEKLRDDPIREEGPLIYHLDVAAMYPNIILTNRLQPPSIVTDEICTACDFNRPGKTCLRKLEWVWRGVTFMGKKSDYYHLKKQIESEFVDAGANIMSSKSFLDLPKVDQQSKLKERLKKYCQKAYKRVLDKPITEVREAGICMRENPFYVDTVRSFRDRRYEYKTLNKVWKGKLSEAKASGNSIKIQEAQDMVVVYDSLQLAHKCILNSFYGYVMRKGARWYSMEMAGVVTYTGAKIIQNARLLIERIGKPLELDTDGIWCCLPGSFPENFTFKTIDMKKLTISYPCVMLNVDVAKNNTNDQYQTLVDPVRKTYKSHSECSIEFEVDGPYKAMIIPASKEEGILIKKRYAVFNHDGTLAELKGFEIKRRGELKLIKVFQAELFDKFLHGSTLEECYSAVAAVADRWLDLLDNQGKDIADSELLDYISESSTMSKSLADYGEQKSCAVTTAKRLAEFLGVTMVKDKGLRCQYIVACEPKGTPVSERAVPVAIFTTNPEVMKFHLRKWCKTSSDVGIRLIIDWSYYKQRLSSAIQKVITIPAAMQKVANPVPRVLHPDWLHKKVREKDDKFRQRKLVDMFSSANKDVVLDTDLPVTKDNVEDIEDFCKENRPSVKGPKPIARSYEVNKKQSECEQQESWDTEFHDISFQNIDKSVNYQGWLELKKRKWKVTLEKKKKRRLGDLRSSNQVDTHEINQKVGQGRGGVGSYFRRPEEALTSSHWQIIQLVPSPQSGQFFAWVVVEGLMLKIPLSIPRVFYINSKVPIDEYFQGKCVNKILPHGRPCYSLTEVKIQEDQFKKESKKRAALLADPGVEGIYETKVPLEFSAICQIGCVCKIDNKAKHRNTQDGWEVGELHMKTTTECHYLKRSIPLVYLYNSTSTGRAIYVLYCHVSKLMSAVVVDPFNGNELLPSALERQFRDSCLELSLDSLSWDGIRFQVHYVDHPEAAKKIIQRAISEYREENCGPTVAVIECPDFTFMKEGIKALDDFPCVRIPFNDDDNSYQPVSWQRPAAKIAMFRCAAAFQWLDRRITQSRYAHVPLGNFGLDWLTFTIDIFLSRALRDQQQVLWVSDNGVPDLGGINNEEAFFADEVQQTSLVFPGAYRKVSVELKIHNLAVNALLKSNLVNEMEGGGFMGFEQDVNPRGINSNDNTSFDETTGCAQAFRVLKQLIHSCLTDVRKSKNIYADSILQRLSWWLCSPSSKLHDPALHLMLHKVMQKVFALLLTDLRRLGAIIIYADFSKVIIDTVKFDLSAAKAYCESLLSTVRNSDIFEWILLEPVHYWHSLLFMDQYNYAGIRADDEISLDEVTIEPKWSVARHLPEYIERDFIIIIAKFIFDPWKFAIENKKGSSESLEAQMIEYLREQIGSTFINMLVKKVDDIMSHMKEINVSDASRVSGQAPKGDYSLEFIQVISAVLALDQNVQQDVLVMRKSLLKYIKVKECAAEAEFLDPGPSFILPNVACSNCDAYRDLDICRDPALLTEKEWSCADTQCGKIYDREQMESSLLEMVRQRERMYHMQDVVCIRCNQVKAAHLTEQCECSGSFRCKESGSEFSKRMEIFMDIAKRQKFRLLEEYISWIIYGPSY.

3 short sequence motifs (nuclear localization signal) span residues 5-12, 1137-1144, and 1239-1246; these read NRRRDRKD, HKKVREKD, and LKKRKWKV. Residues Cys2038, Cys2041, Cys2063, and Cys2068 each coordinate Zn(2+). A CysA-type zinc finger spans residues 2038–2068; that stretch reads CSNCDAYRDLDICRDPALLTEKEWSCADTQC. [4Fe-4S] cluster is bound by residues Cys2099, Cys2102, Cys2114, and Cys2116. Residues 2099 to 2116 carry the CysB motif motif; sequence CIRCNQVKAAHLTEQCEC. The short motif at 2130–2137 is the Nuclear localization signal 4 element; that stretch reads SKRMEIFM.

The protein belongs to the DNA polymerase type-B family. Heterotetramer. Subunit of the DNA polymerase II. Interacts (via C-terminus) with DPB2. Interacts with LHP1/TFL2. The cofactor is [4Fe-4S] cluster. Mostly expressed at low levels in inflorescence (floral meristem and flowers until anthesis), and, to a lower extent, in roots, seeds and leaves.

It localises to the nucleus. It carries out the reaction DNA(n) + a 2'-deoxyribonucleoside 5'-triphosphate = DNA(n+1) + diphosphate. DNA polymerase II, which participates in chromosomal DNA replication. Required for the timing and determination of cell fate during plant embryogenesis and root pole development, by promoting cell cycle and cell type patterning. Necessary for proper shoot (SAM) and root apical meristem (RAM) functions. Involved in maintaining epigenetic states, controlling hypersensitive response (HR), and mediating abscisic acid (ABA) signaling. Required for flowering repression through a mechanism involving epigenetic gene silencing. May participate in processes involved in chromatin-mediated cellular memory. This is DNA polymerase epsilon catalytic subunit A (POL2A) from Arabidopsis thaliana (Mouse-ear cress).